Reading from the N-terminus, the 830-residue chain is C-Jun-amino-terminal kinase-interacting protein 2 (830 aa).

Disordered regions lie at residues 1 to 26 (MADRAEMFSLSTFHSLSPPGCRPPQD), 44 to 354 (CGLG…ADSP), 367 to 438 (EGSS…PGPC), 452 to 504 (LWAT…GSTA), and 539 to 574 (GNDSEEDSSCEASEEEAGATLLGSDQVPEDASPDSP). The segment covering 77 to 105 (DFQEFEMIDDNEEEDDEEEEEEEEEEEDG) has biased composition (acidic residues). The interval 111 to 278 (AGGGPGSQAL…RMISSISETE (168 aa)) is JNK-binding domain (JBD). A compositionally biased stretch (polar residues) spans 142 to 172 (LHLTTLGAQDSLNNNNGGFTSAPPSSWQETV). Low complexity-rich tracts occupy residues 176-190 (PAQEPLKELPAPLLP) and 218-227 (ASSGGASPSS). The span at 233–249 (ADLRSHSSGGHEGRRSS) shows a compositional bias: basic and acidic residues. The interval 242–504 (GHEGRRSSQE…PGSRTTGSTA (263 aa)) is necessary for interaction with FGF13. Serine 257, serine 304, and serine 307 each carry phosphoserine. Over residues 271–307 (ISSISETELELSSDGGSSSGRSSHLTNSIEEASSPAS) the composition is skewed to low complexity. Over residues 333 to 352 (TNSEYESGSESEPDLSEDAD) the composition is skewed to acidic residues. Positions 427–437 (APRLGPAQPGP) are enriched in low complexity. Composition is skewed to acidic residues over residues 471 to 490 (SEEEEEDEEEDEEDEEDAED) and 541 to 555 (DSEEDSSCEASEEEA). The region spanning 610–671 (EREQTHRAVF…PAFYAHAVPG (62 aa)) is the SH3 domain. The PID domain occupies 683-819 (PCWVDRFDVQ…FLEYYQEHLA (137 aa)).

It belongs to the JIP scaffold family. As to quaternary structure, forms homo- or heterooligomeric complexes. Binds specific components of the JNK signaling pathway namely JNK1, JNK2, JNK3, MAP2K7, MAP3K10, MAP3K11, MAP3K12 and MAPK13. Also binds the proline-rich domain-containing splice variant of apolipoprotein E receptor 2 (ApoER2). Binds the TPR motif-containing C-terminal of kinesin light chain. Binds the cytoplasmic tails of LRP1 and LRP2 (Megalin). Interacts with DCLK2. Interacts with FGF13; enables the interaction with MAPK13 and may regulate the MAPK8IP2 scaffolding activity. Interacts with TIAM1 and TIAM2. Interacts with SH3RF2. Highly expressed in brain. Expressed in all neurons. Also expressed in testis, primarily in the epididymal epidermis.

It is found in the cytoplasm. In terms of biological role, the JNK-interacting protein (JIP) group of scaffold proteins selectively mediates JNK signaling by aggregating specific components of the MAPK cascade to form a functional JNK signaling module. JIP2 inhibits IL1 beta-induced apoptosis in insulin-secreting cells. The protein is C-Jun-amino-terminal kinase-interacting protein 2 (Mapk8ip2) of Mus musculus (Mouse).